The chain runs to 565 residues: Calcium-dependent protein kinase 21 (565 aa).

A lipid anchor (N-myristoyl glycine) is attached at Gly-2. Positions 28 to 55 are disordered; it reads PVPDAEAASPRKDGVDGDGDDVRGGGGG. The span at 36–50 shows a compositional bias: basic and acidic residues; that stretch reads SPRKDGVDGDGDDVR. In terms of domain architecture, Protein kinase spans 77 to 358; that stretch reads YVLGKELGRG…AKQVLEHPWL (282 aa). ATP-binding positions include 83–91 and Lys-106; that span reads LGRGEFGVT. Residue Asp-224 is the Proton acceptor of the active site. The interval 364-394 is autoinhibitory domain; that stretch reads APNVSLGDAVRARLQQFSAMNKFKKKALGVV. EF-hand domains lie at 401 to 436, 437 to 472, 473 to 500, and 504 to 539; these read EEVD…NGQP, VPEP…LKKM, SNDE…ELRE, and PNEQ…GADW. Ca(2+) contacts are provided by Asp-414, Asp-416, Asn-418, His-420, Glu-425, Asp-450, Asp-452, Asn-454, Thr-456, Glu-461, Asp-486, Asp-488, Ser-490, Glu-497, Asp-517, Asp-519, Asp-521, Arg-523, and Glu-528.

Belongs to the protein kinase superfamily. Ser/Thr protein kinase family. CDPK subfamily. In terms of tissue distribution, expressed in spikelets and developing seeds.

Its subcellular location is the membrane. It catalyses the reaction L-seryl-[protein] + ATP = O-phospho-L-seryl-[protein] + ADP + H(+). The enzyme catalyses L-threonyl-[protein] + ATP = O-phospho-L-threonyl-[protein] + ADP + H(+). Its activity is regulated as follows. Activated by calcium. Autophosphorylation may play an important role in the regulation of the kinase activity. May play a role in signal transduction pathways that involve calcium as a second messenger. Functions in signal transduction pathways that positively regulate responses to abscisic acid (ABA) and salt stress. The polypeptide is Calcium-dependent protein kinase 21 (Oryza sativa subsp. japonica (Rice)).